Here is a 194-residue protein sequence, read N- to C-terminus: Leucyl/phenylalanyl-tRNA--protein transferase (194 aa).

It belongs to the L/F-transferase family.

It localises to the cytoplasm. The enzyme catalyses N-terminal L-lysyl-[protein] + L-leucyl-tRNA(Leu) = N-terminal L-leucyl-L-lysyl-[protein] + tRNA(Leu) + H(+). It catalyses the reaction N-terminal L-arginyl-[protein] + L-leucyl-tRNA(Leu) = N-terminal L-leucyl-L-arginyl-[protein] + tRNA(Leu) + H(+). It carries out the reaction L-phenylalanyl-tRNA(Phe) + an N-terminal L-alpha-aminoacyl-[protein] = an N-terminal L-phenylalanyl-L-alpha-aminoacyl-[protein] + tRNA(Phe). In terms of biological role, functions in the N-end rule pathway of protein degradation where it conjugates Leu, Phe and, less efficiently, Met from aminoacyl-tRNAs to the N-termini of proteins containing an N-terminal arginine or lysine. This Prosthecochloris aestuarii (strain DSM 271 / SK 413) protein is Leucyl/phenylalanyl-tRNA--protein transferase.